The primary structure comprises 718 residues: Polyribonucleotide nucleotidyltransferase (718 aa).

Mg(2+)-binding residues include Asp-491 and Asp-497. The KH domain maps to 558-617 (PRMLTIKINPEKIRDVIGKGGATIRALTEETGTQIDISDDGTIVIASVDEGQAKEAQRRI). An S1 motif domain is found at 627 to 695 (GQVYDGSVLR…EKGRLRLSVK (69 aa)).

The protein belongs to the polyribonucleotide nucleotidyltransferase family. Mg(2+) is required as a cofactor.

Its subcellular location is the cytoplasm. It carries out the reaction RNA(n+1) + phosphate = RNA(n) + a ribonucleoside 5'-diphosphate. In terms of biological role, involved in mRNA degradation. Catalyzes the phosphorolysis of single-stranded polyribonucleotides processively in the 3'- to 5'-direction. The protein is Polyribonucleotide nucleotidyltransferase of Bordetella avium (strain 197N).